We begin with the raw amino-acid sequence, 146 residues long: MRVVLQRSKKASVTVDGEIVGQIPFGLTLLVGITHEDTEKDATYIAEKIANLRIFEDESGKMNHSVLDVEGQVLSISQFTLYGDCRKGRRPNFMDAAKPDYAERLYDFFNEEVRKQGLHVETGKFGAMMDVSLINDGPVTLIVESK.

The short motif at 137–138 (GP) is the Gly-cisPro motif, important for rejection of L-amino acids element.

Belongs to the DTD family. Homodimer.

The protein resides in the cytoplasm. It carries out the reaction glycyl-tRNA(Ala) + H2O = tRNA(Ala) + glycine + H(+). It catalyses the reaction a D-aminoacyl-tRNA + H2O = a tRNA + a D-alpha-amino acid + H(+). Its function is as follows. An aminoacyl-tRNA editing enzyme that deacylates mischarged D-aminoacyl-tRNAs. Also deacylates mischarged glycyl-tRNA(Ala), protecting cells against glycine mischarging by AlaRS. Acts via tRNA-based rather than protein-based catalysis; rejects L-amino acids rather than detecting D-amino acids in the active site. By recycling D-aminoacyl-tRNA to D-amino acids and free tRNA molecules, this enzyme counteracts the toxicity associated with the formation of D-aminoacyl-tRNA entities in vivo and helps enforce protein L-homochirality. This is D-aminoacyl-tRNA deacylase from Bacillus cereus (strain ATCC 14579 / DSM 31 / CCUG 7414 / JCM 2152 / NBRC 15305 / NCIMB 9373 / NCTC 2599 / NRRL B-3711).